An 820-amino-acid polypeptide reads, in one-letter code: Phospholipase D alpha 3 (820 aa).

Positions 1-133 (MTEQLLLHGT…ITGQPIDRWL (133 aa)) constitute a C2 domain. Position 194 (Asp-194) interacts with Ca(2+). Residues 334–371 (TMFTHHQKTIVVDSEVDGSLTKRRIVSFLGGIDLCDGR) form the PLD phosphodiesterase 1 domain. Active-site residues include His-339, Lys-341, and Asp-346. His-339 lines the a 1,2-diacyl-sn-glycero-3-phosphate pocket. 2 residues coordinate Ca(2+): His-377 and His-411. Gln-528 and His-667 together coordinate a 1,2-diacyl-sn-glycero-3-phosphate. Residues 662–689 (FMIYVHSKMMIVDDEYIIIGSANINQRS) enclose the PLD phosphodiesterase 2 domain. Catalysis depends on residues His-667, Lys-669, and Asp-674. Ca(2+) is bound at residue Glu-730.

The protein belongs to the phospholipase D family. C2-PLD subfamily. It depends on Ca(2+) as a cofactor. Expressed in buds, flowers, siliques, stems, old leaves and roots. Expressed in the sieve elements.

Its subcellular location is the cytoplasm. The protein resides in the membrane. It catalyses the reaction a 1,2-diacyl-sn-glycero-3-phosphocholine + H2O = a 1,2-diacyl-sn-glycero-3-phosphate + choline + H(+). In terms of biological role, hydrolyzes glycerol-phospholipids at the terminal phosphodiesteric bond to generate phosphatidic acids (PA). Active with phosphatidylcholine (PC), phosphatidylethanolamine (PE), phosphatidylglycerol (PG), and phosphatidylserine (PS) as substrates. No activity toward phosphatidylinositol (PI) or PIP2. Positively mediates plant responses to hyperosmotic stresses and promotes root growth, flowering, and stress avoidance. Not involved in the abscisic acid regulation of stomatal movement and transpirational water loss. The protein is Phospholipase D alpha 3 of Arabidopsis thaliana (Mouse-ear cress).